A 184-amino-acid polypeptide reads, in one-letter code: Protein DP71L (184 aa).

Positions 1–15 are enriched in basic residues; the sequence is MSRRNKRSRRRRKKP. Residues 1–41 are disordered; it reads MSRRNKRSRRRRKKPLNTIQPGPSKPSAQDEPIKSVSHHSS. Important for host CHOP inhibition regions lie at residues 125-127 and 169-173; these read VYF and LSAVL.

The protein belongs to the asfivirus DP71L family. As to quaternary structure, interacts (via C-terminus) with host PPP1CB.

In terms of biological role, interacts with the host phosphatase PP1 catalytic subunit (PPP1CB) and recruits it to dephosphorylate EIF2S1/eIF2alpha and therefore restores the host translation that has been shut-down by the host. Also inhibits the EIF2S1/eIF2alpha-ATF4-DDIT3/CHOP pathway. The protein is Protein DP71L of Ornithodoros (relapsing fever ticks).